Here is a 123-residue protein sequence, read N- to C-terminus: S-adenosylmethionine decarboxylase proenzyme 2 (123 aa).

S65 (schiff-base intermediate with substrate; via pyruvic acid) is an active-site residue. At S65 the chain carries Pyruvic acid (Ser); by autocatalysis. The active-site Proton acceptor; for processing activity is H70. The active-site Proton donor; for catalytic activity is C85.

It belongs to the prokaryotic AdoMetDC family. Type 1 subfamily. In terms of assembly, heterotetramer of two alpha and two beta chains arranged as a dimer of alpha/beta heterodimers. The cofactor is pyruvate. Is synthesized initially as an inactive proenzyme. Formation of the active enzyme involves a self-maturation process in which the active site pyruvoyl group is generated from an internal serine residue via an autocatalytic post-translational modification. Two non-identical subunits are generated from the proenzyme in this reaction, and the pyruvate is formed at the N-terminus of the alpha chain, which is derived from the carboxyl end of the proenzyme. The post-translation cleavage follows an unusual pathway, termed non-hydrolytic serinolysis, in which the side chain hydroxyl group of the serine supplies its oxygen atom to form the C-terminus of the beta chain, while the remainder of the serine residue undergoes an oxidative deamination to produce ammonia and the pyruvoyl group blocking the N-terminus of the alpha chain.

The enzyme catalyses S-adenosyl-L-methionine + H(+) = S-adenosyl 3-(methylsulfanyl)propylamine + CO2. Its pathway is amine and polyamine biosynthesis; S-adenosylmethioninamine biosynthesis; S-adenosylmethioninamine from S-adenosyl-L-methionine: step 1/1. Functionally, catalyzes the decarboxylation of S-adenosylmethionine to S-adenosylmethioninamine (dcAdoMet), the propylamine donor required for the synthesis of the polyamines spermine and spermidine from the diamine putrescine. The protein is S-adenosylmethionine decarboxylase proenzyme 2 of Bacillus cereus (strain ZK / E33L).